The following is a 282-amino-acid chain: Bifunctional protein FolD (282 aa).

Residues Gly164 to Ser166 and Ser189 contribute to the NADP(+) site.

This sequence belongs to the tetrahydrofolate dehydrogenase/cyclohydrolase family. In terms of assembly, homodimer.

It catalyses the reaction (6R)-5,10-methylene-5,6,7,8-tetrahydrofolate + NADP(+) = (6R)-5,10-methenyltetrahydrofolate + NADPH. It carries out the reaction (6R)-5,10-methenyltetrahydrofolate + H2O = (6R)-10-formyltetrahydrofolate + H(+). The protein operates within one-carbon metabolism; tetrahydrofolate interconversion. Functionally, catalyzes the oxidation of 5,10-methylenetetrahydrofolate to 5,10-methenyltetrahydrofolate and then the hydrolysis of 5,10-methenyltetrahydrofolate to 10-formyltetrahydrofolate. This Anaeromyxobacter dehalogenans (strain 2CP-C) protein is Bifunctional protein FolD.